Consider the following 195-residue polypeptide: E3 ubiquitin-protein ligase ZNRF1 (195 aa).

Over residues 1–10 (MGGKQSSASR) the composition is skewed to polar residues. Residues 1–37 (MGGKQSSASRSRAPFPGVSSDDSAVPPSSNFGHFRGG) form a disordered region. Gly-2 carries the N-myristoyl glycine lipid modification. A compositionally biased stretch (low complexity) spans 18–29 (VSSDDSAVPPSS). The segment at 152–193 (CVICLEELSQGDTIARLPCLCIYHKSCIDSWFEVNRCCPEHP) adopts an RING-type; atypical zinc-finger fold.

The protein resides in the endosome. It localises to the lysosome. The protein localises to the membrane. It catalyses the reaction S-ubiquitinyl-[E2 ubiquitin-conjugating enzyme]-L-cysteine + [acceptor protein]-L-lysine = [E2 ubiquitin-conjugating enzyme]-L-cysteine + N(6)-ubiquitinyl-[acceptor protein]-L-lysine.. It participates in protein modification; protein ubiquitination. In terms of biological role, E3 ubiquitin-protein ligase that plays a role in neuron cells differentiation. Plays a role in the establishment and maintenance of neuronal transmission and plasticity. This Xenopus laevis (African clawed frog) protein is E3 ubiquitin-protein ligase ZNRF1 (znrf1).